The following is a 693-amino-acid chain: Protein-glutamine gamma-glutamyltransferase E (693 aa).

Phosphotyrosine is present on tyrosine 111. A Phosphothreonine modification is found at threonine 112. Residues alanine 222, asparagine 225, asparagine 227, and aspartate 228 each coordinate Ca(2+). Cysteine 273 is a catalytic residue. 5 residues coordinate Ca(2+): aspartate 302, aspartate 304, asparagine 306, serine 308, and aspartate 325. Residues histidine 331 and aspartate 354 contribute to the active site. 4 residues coordinate Ca(2+): asparagine 394, threonine 416, glutamate 444, and glutamate 449. The disordered stretch occupies residues 455-482 (KAMNKLKPNASFGATSSRGPQGEEKEPS).

This sequence belongs to the transglutaminase superfamily. Transglutaminase family. As to quaternary structure, consists of two polypeptide chains, which are synthesized as a precursor form of a single polypeptide. Ca(2+) is required as a cofactor. In terms of processing, activated by proteolytic processing. In vitro activation is commonly achieved by cleavage with dispase, a neutral bacterial protease. Physiological activation may be catalyzed by CTSL and, to a lesser extent, by CTSS.

Its subcellular location is the cytoplasm. The enzyme catalyses L-glutaminyl-[protein] + L-lysyl-[protein] = [protein]-L-lysyl-N(6)-5-L-glutamyl-[protein] + NH4(+). Functionally, catalyzes the calcium-dependent formation of isopeptide cross-links between glutamine and lysine residues in various proteins, as well as the conjugation of polyamines to proteins. Involved in the formation of the cornified envelope (CE), a specialized component consisting of covalent cross-links of proteins beneath the plasma membrane of terminally differentiated keratinocytes. Catalyzes small proline-rich proteins and LOR cross-linking to form small interchain oligomers, which are further cross-linked by TGM1 onto the growing CE scaffold. In hair follicles, involved in cross-linking structural proteins to hardening the inner root sheath. In Rattus norvegicus (Rat), this protein is Protein-glutamine gamma-glutamyltransferase E (Tgm3).